The primary structure comprises 439 residues: Xylose isomerase (439 aa).

Residues histidine 103 and aspartate 106 contribute to the active site. Residues glutamate 234, glutamate 270, histidine 273, aspartate 298, aspartate 309, aspartate 311, and aspartate 341 each contribute to the Mg(2+) site.

It belongs to the xylose isomerase family. In terms of assembly, homotetramer. Mg(2+) is required as a cofactor.

It is found in the cytoplasm. The catalysed reaction is alpha-D-xylose = alpha-D-xylulofuranose. The sequence is that of Xylose isomerase from Bacteroides fragilis (strain YCH46).